The following is a 425-amino-acid chain: Phosphomethylpyrimidine synthase (425 aa).

Residues Asn-66, Met-95, Tyr-124, His-159, 181–183 (SRG), 222–225 (DAYR), and Glu-261 contribute to the substrate site. His-265 lines the Zn(2+) pocket. Tyr-288 serves as a coordination point for substrate. His-329 is a Zn(2+) binding site. Residues Cys-406, Cys-409, and Cys-413 each coordinate [4Fe-4S] cluster.

It belongs to the ThiC family. It depends on [4Fe-4S] cluster as a cofactor.

It carries out the reaction 5-amino-1-(5-phospho-beta-D-ribosyl)imidazole + S-adenosyl-L-methionine = 4-amino-2-methyl-5-(phosphooxymethyl)pyrimidine + CO + 5'-deoxyadenosine + formate + L-methionine + 3 H(+). It participates in cofactor biosynthesis; thiamine diphosphate biosynthesis. Its function is as follows. Catalyzes the synthesis of the hydroxymethylpyrimidine phosphate (HMP-P) moiety of thiamine from aminoimidazole ribotide (AIR) in a radical S-adenosyl-L-methionine (SAM)-dependent reaction. The protein is Phosphomethylpyrimidine synthase of Archaeoglobus fulgidus (strain ATCC 49558 / DSM 4304 / JCM 9628 / NBRC 100126 / VC-16).